Consider the following 466-residue polypeptide: ATP synthase subunit beta (466 aa).

ATP is bound at residue Gly-155–Thr-162.

Belongs to the ATPase alpha/beta chains family. F-type ATPases have 2 components, CF(1) - the catalytic core - and CF(0) - the membrane proton channel. CF(1) has five subunits: alpha(3), beta(3), gamma(1), delta(1), epsilon(1). CF(0) has three main subunits: a(1), b(2) and c(9-12). The alpha and beta chains form an alternating ring which encloses part of the gamma chain. CF(1) is attached to CF(0) by a central stalk formed by the gamma and epsilon chains, while a peripheral stalk is formed by the delta and b chains.

It is found in the cell inner membrane. The enzyme catalyses ATP + H2O + 4 H(+)(in) = ADP + phosphate + 5 H(+)(out). In terms of biological role, produces ATP from ADP in the presence of a proton gradient across the membrane. The catalytic sites are hosted primarily by the beta subunits. This Azoarcus sp. (strain BH72) protein is ATP synthase subunit beta.